The sequence spans 225 residues: Thaumatin-like protein (225 aa).

Residues 1 to 24 (MSTFKSLSLSALLFIAFLFTCARG) form the signal peptide. 8 disulfide bridges follow: cysteine 33–cysteine 224, cysteine 74–cysteine 84, cysteine 89–cysteine 95, cysteine 140–cysteine 213, cysteine 146–cysteine 196, cysteine 154–cysteine 164, cysteine 168–cysteine 177, and cysteine 178–cysteine 183.

It belongs to the thaumatin family. Post-translationally, N-glycosylated.

The protein localises to the secreted. Functionally, has antifungal activity against B.cinerea, C.comatus, M.arachidicola, P.piricola, C.albicans and S.carlsbergensis. Inhibits HIV-1 reverse transcriptase. The sequence is that of Thaumatin-like protein from Actinidia chinensis var. chinensis (Chinese soft-hair kiwi).